The primary structure comprises 261 residues: Prostate-specific antigen (261 aa).

The N-terminal stretch at 1–17 is a signal peptide; the sequence is MWVPVVFLTLSVTWIGA. Positions 18–24 are cleaved as a propeptide — activation peptide; sequence APLILSR. One can recognise a Peptidase S1 domain in the interval 25-258; that stretch reads IVGGWECEKH…YRKWIKDTIV (234 aa). Cystine bridges form between C31–C173, C50–C66, C152–C219, C184–C198, and C209–C234. H65 serves as the catalytic Charge relay system. N69 carries an N-linked (GlcNAc...) asparagine glycan. D120 functions as the Charge relay system in the catalytic mechanism. S213 (charge relay system) is an active-site residue.

This sequence belongs to the peptidase S1 family. Kallikrein subfamily. In terms of assembly, forms a heterodimer with SERPINA5.

It localises to the secreted. The catalysed reaction is Preferential cleavage: -Tyr-|-Xaa-.. Its activity is regulated as follows. Inhibited by SERPINA5. Activity is strongly inhibited by Zn2+, 100 times more abundant in semen than in serum. This inhibition is relieved by exposure to semenogelins, which are avid zinc binders. In terms of biological role, hydrolyzes semenogelin-1 thus leading to the liquefaction of the seminal coagulum. The sequence is that of Prostate-specific antigen (KLK3) from Homo sapiens (Human).